Reading from the N-terminus, the 859-residue chain is DNA mismatch repair protein MutS (859 aa).

622-629 is an ATP binding site; the sequence is GPNMGGKS.

Belongs to the DNA mismatch repair MutS family.

Its function is as follows. This protein is involved in the repair of mismatches in DNA. It is possible that it carries out the mismatch recognition step. This protein has a weak ATPase activity. The sequence is that of DNA mismatch repair protein MutS from Syntrophomonas wolfei subsp. wolfei (strain DSM 2245B / Goettingen).